The chain runs to 185 residues: Ribosome-recycling factor (185 aa).

The protein belongs to the RRF family.

The protein resides in the cytoplasm. In terms of biological role, responsible for the release of ribosomes from messenger RNA at the termination of protein biosynthesis. May increase the efficiency of translation by recycling ribosomes from one round of translation to another. The sequence is that of Ribosome-recycling factor from Actinobacillus succinogenes (strain ATCC 55618 / DSM 22257 / CCUG 43843 / 130Z).